We begin with the raw amino-acid sequence, 204 residues long: LexA repressor (204 aa).

The segment at residues 31–51 (VREIGQAVGLKSSSTVHTHLV) is a DNA-binding region (H-T-H motif). Active-site for autocatalytic cleavage activity residues include serine 128 and lysine 165.

Belongs to the peptidase S24 family. In terms of assembly, homodimer.

It catalyses the reaction Hydrolysis of Ala-|-Gly bond in repressor LexA.. In terms of biological role, represses a number of genes involved in the response to DNA damage (SOS response), including recA and lexA. In the presence of single-stranded DNA, RecA interacts with LexA causing an autocatalytic cleavage which disrupts the DNA-binding part of LexA, leading to derepression of the SOS regulon and eventually DNA repair. In Syntrophomonas wolfei subsp. wolfei (strain DSM 2245B / Goettingen), this protein is LexA repressor.